The primary structure comprises 336 residues: Anthranilate phosphoribosyltransferase (336 aa).

Residues G82, 85-86 (GD), T90, 92-95 (NIST), 110-118 (KHGNRSVSS), and S122 contribute to the 5-phospho-alpha-D-ribose 1-diphosphate site. G82 is a binding site for anthranilate. S94 contributes to the Mg(2+) binding site. N113 lines the anthranilate pocket. Residue R168 coordinates anthranilate. Positions 227 and 228 each coordinate Mg(2+).

Belongs to the anthranilate phosphoribosyltransferase family. As to quaternary structure, homodimer. Mg(2+) is required as a cofactor.

It carries out the reaction N-(5-phospho-beta-D-ribosyl)anthranilate + diphosphate = 5-phospho-alpha-D-ribose 1-diphosphate + anthranilate. It participates in amino-acid biosynthesis; L-tryptophan biosynthesis; L-tryptophan from chorismate: step 2/5. In terms of biological role, catalyzes the transfer of the phosphoribosyl group of 5-phosphorylribose-1-pyrophosphate (PRPP) to anthranilate to yield N-(5'-phosphoribosyl)-anthranilate (PRA). In Leptospira interrogans serogroup Icterohaemorrhagiae serovar Lai (strain 56601), this protein is Anthranilate phosphoribosyltransferase.